The chain runs to 451 residues: MSYFGTDGIRGLFGKFPITPDFVLKLGYVTGQVLVEQNPNPKKKPSVVIGKDTRLSGYVIEAALQAGFNSAGVDVHMIGPLPTPAIAHLTRSFHADAGVVISASHNPYYDNGIKFFAADGRKLSDEMQNAINDKLKTVVEGHADYTQDDPAQLGKHFRINDAKGRYIEFCKGSFPYQYDLSNLTVVIDCANGAGYSVGPRVLRELGANVIAIHNKPNGININDNCGSTHPETLQKAVLEHKADVGIALDGDGDRIIMVDEKGVVVDGDGILYILATKSEAKAEGVVGTQMSNMGLQLALEAAGIALERAKVGDRYVMQGLEAKGWILGGEPSGHILCLDKSRTGDAIIAGLQVLAVMAQTQKSLSQLTEGFKLLPQCLVNVRLEQMQDPYDFPELVAAFEAASKQIEGRGRILIRKSGTEPLIRVMVELDNAEECDKLAHELADKVKQVMA.

Ser-104 serves as the catalytic Phosphoserine intermediate. Mg(2+) contacts are provided by Ser-104, Asp-249, Asp-251, and Asp-253. Phosphoserine is present on Ser-104.

Belongs to the phosphohexose mutase family. The cofactor is Mg(2+). In terms of processing, activated by phosphorylation.

The enzyme catalyses alpha-D-glucosamine 1-phosphate = D-glucosamine 6-phosphate. Its function is as follows. Catalyzes the conversion of glucosamine-6-phosphate to glucosamine-1-phosphate. This chain is Phosphoglucosamine mutase, found in Psychrobacter sp. (strain PRwf-1).